The primary structure comprises 188 residues: Ribosome-recycling factor (188 aa).

This sequence belongs to the RRF family.

Its subcellular location is the cytoplasm. In terms of biological role, responsible for the release of ribosomes from messenger RNA at the termination of protein biosynthesis. May increase the efficiency of translation by recycling ribosomes from one round of translation to another. The protein is Ribosome-recycling factor of Cereibacter sphaeroides (strain ATCC 17029 / ATH 2.4.9) (Rhodobacter sphaeroides).